We begin with the raw amino-acid sequence, 367 residues long: 1-deoxy-D-xylulose 5-phosphate reductoisomerase (367 aa).

Residues Thr-10, Gly-11, Ser-12, Ile-13, Gly-34, Lys-35, Asn-36, and Asn-112 each coordinate NADPH. Lys-113 serves as a coordination point for 1-deoxy-D-xylulose 5-phosphate. Glu-114 contributes to the NADPH binding site. Asp-138 contacts Mn(2+). Residues Ser-139, Glu-140, Ser-164, and His-186 each contribute to the 1-deoxy-D-xylulose 5-phosphate site. Mn(2+) is bound at residue Glu-140. Gly-192 contacts NADPH. The 1-deoxy-D-xylulose 5-phosphate site is built by Ser-199, Asn-204, Lys-205, and Glu-208. Glu-208 lines the Mn(2+) pocket.

It belongs to the DXR family. Requires Mg(2+) as cofactor. Mn(2+) serves as cofactor.

It carries out the reaction 2-C-methyl-D-erythritol 4-phosphate + NADP(+) = 1-deoxy-D-xylulose 5-phosphate + NADPH + H(+). The protein operates within isoprenoid biosynthesis; isopentenyl diphosphate biosynthesis via DXP pathway; isopentenyl diphosphate from 1-deoxy-D-xylulose 5-phosphate: step 1/6. In terms of biological role, catalyzes the NADPH-dependent rearrangement and reduction of 1-deoxy-D-xylulose-5-phosphate (DXP) to 2-C-methyl-D-erythritol 4-phosphate (MEP). This is 1-deoxy-D-xylulose 5-phosphate reductoisomerase from Thermus thermophilus (strain ATCC BAA-163 / DSM 7039 / HB27).